A 170-amino-acid polypeptide reads, in one-letter code: Probable calcium-binding protein CML29 (170 aa).

EF-hand domains follow at residues 27-62 (SYIS…LGLD), 63-98 (KPEH…GQLG), and 138-170 (ASVE…AQLL). Positions 40, 42, 44, 51, 76, 78, 80, 82, 87, 151, 153, 155, and 162 each coordinate Ca(2+).

Functionally, potential calcium sensor. The sequence is that of Probable calcium-binding protein CML29 (CML29) from Oryza sativa subsp. japonica (Rice).